We begin with the raw amino-acid sequence, 429 residues long: Ribosomal RNA small subunit methyltransferase B (429 aa).

S-adenosyl-L-methionine contacts are provided by residues cysteine 254–lysine 260, aspartate 277, aspartate 303, and aspartate 322. Residue cysteine 375 is the Nucleophile of the active site.

This sequence belongs to the class I-like SAM-binding methyltransferase superfamily. RsmB/NOP family.

Its subcellular location is the cytoplasm. It catalyses the reaction cytidine(967) in 16S rRNA + S-adenosyl-L-methionine = 5-methylcytidine(967) in 16S rRNA + S-adenosyl-L-homocysteine + H(+). Its function is as follows. Specifically methylates the cytosine at position 967 (m5C967) of 16S rRNA. The polypeptide is Ribosomal RNA small subunit methyltransferase B (Escherichia coli O6:K15:H31 (strain 536 / UPEC)).